A 311-amino-acid chain; its full sequence is tRNA dimethylallyltransferase (311 aa).

Residue 12-19 coordinates ATP; it reads GPTASGKT. A substrate-binding site is contributed by 14 to 19; the sequence is TASGKT. 2 interaction with substrate tRNA regions span residues 37–40 and 161–165; these read DSAM and QRIQR.

Belongs to the IPP transferase family. In terms of assembly, monomer. The cofactor is Mg(2+).

The enzyme catalyses adenosine(37) in tRNA + dimethylallyl diphosphate = N(6)-dimethylallyladenosine(37) in tRNA + diphosphate. In terms of biological role, catalyzes the transfer of a dimethylallyl group onto the adenine at position 37 in tRNAs that read codons beginning with uridine, leading to the formation of N6-(dimethylallyl)adenosine (i(6)A). The protein is tRNA dimethylallyltransferase of Coxiella burnetii (strain RSA 331 / Henzerling II).